The following is a 213-amino-acid chain: Adenylyl-sulfate kinase (213 aa).

Residues 1–17 are compositionally biased toward basic and acidic residues; that stretch reads MPAHQLDDHNQETRSDD. The interval 1–20 is disordered; that stretch reads MPAHQLDDHNQETRSDDENI. Position 47-54 (47-54) interacts with ATP; the sequence is GLSGSGKS. Ser121 (phosphoserine intermediate) is an active-site residue.

Belongs to the APS kinase family.

It carries out the reaction adenosine 5'-phosphosulfate + ATP = 3'-phosphoadenylyl sulfate + ADP + H(+). It functions in the pathway sulfur metabolism; hydrogen sulfide biosynthesis; sulfite from sulfate: step 2/3. Its function is as follows. Catalyzes the synthesis of activated sulfate. In Yersinia pestis, this protein is Adenylyl-sulfate kinase.